The primary structure comprises 226 residues: Ribonuclease 3 (226 aa).

Positions 6-128 (INRLQRKLGY…LIGAIFLDSD (123 aa)) constitute an RNase III domain. Residue E41 coordinates Mg(2+). D45 is a catalytic residue. D114 and E117 together coordinate Mg(2+). Residue E117 is part of the active site. The DRBM domain maps to 155 to 225 (DPKTRLQEYL…AEQALKQLEL (71 aa)).

Belongs to the ribonuclease III family. In terms of assembly, homodimer. Mg(2+) is required as a cofactor.

It is found in the cytoplasm. The enzyme catalyses Endonucleolytic cleavage to 5'-phosphomonoester.. In terms of biological role, digests double-stranded RNA. Involved in the processing of primary rRNA transcript to yield the immediate precursors to the large and small rRNAs (23S and 16S). Processes some mRNAs, and tRNAs when they are encoded in the rRNA operon. Processes pre-crRNA and tracrRNA of type II CRISPR loci if present in the organism. This chain is Ribonuclease 3, found in Photorhabdus laumondii subsp. laumondii (strain DSM 15139 / CIP 105565 / TT01) (Photorhabdus luminescens subsp. laumondii).